The following is a 578-amino-acid chain: Telomere repeat-binding protein 1 (578 aa).

The 80-residue stretch at 293 to 372 folds into the Ubiquitin-like domain; the sequence is VKLRIKSFRV…HLDSLDFSLE (80 aa). Positions 440–467 are disordered; the sequence is ELSSQSQPPSRKSRRSEQQQQQAAQRRI. The region spanning 463–522 is the HTH myb-type domain; it reads AQRRIRRPFSVAEVEALVQAVEKLGTGRWRDVKLCAFEDADHRTYVDLKDKWKTLVHTAK. Interaction with DNA stretches follow at residues 465-469, 511-515, and 522-529; these read RRIRR, KDKWK, and KISPQQRR. Positions 491 to 518 form a DNA-binding region, H-T-H motif; it reads WRDVKLCAFEDADHRTYVDLKDKWKTLV.

Homodimer and heterodimer with TRP2 and TRP3. Interacts with KU70. In terms of tissue distribution, expressed ubiquitously. Highest expression in flowers and leaves.

It is found in the nucleus. Binds specifically to the plant telomeric double-stranded DNA sequences 5'-GGTTTAG-3'. At least 4 repeats of telomeric sequences are required for binding. Induces DNA bending. The sequence is that of Telomere repeat-binding protein 1 (TRP1) from Arabidopsis thaliana (Mouse-ear cress).